A 207-amino-acid polypeptide reads, in one-letter code: Urease accessory protein UreG (207 aa).

14 to 21 (GPVGSGKT) serves as a coordination point for GTP.

Belongs to the SIMIBI class G3E GTPase family. UreG subfamily. As to quaternary structure, homodimer. UreD, UreF and UreG form a complex that acts as a GTP-hydrolysis-dependent molecular chaperone, activating the urease apoprotein by helping to assemble the nickel containing metallocenter of UreC. The UreE protein probably delivers the nickel.

Its subcellular location is the cytoplasm. Functionally, facilitates the functional incorporation of the urease nickel metallocenter. This process requires GTP hydrolysis, probably effectuated by UreG. This is Urease accessory protein UreG from Pseudomonas entomophila (strain L48).